We begin with the raw amino-acid sequence, 2869 residues long: uncharacterized protein (2869 aa).

Residues 1-10 (MNINRNNIND) show a composition bias toward low complexity. Disordered stretches follow at residues 1 to 132 (MNIN…SSNK), 171 to 349 (NNNN…DNYR), 380 to 485 (FNES…TSSS), 498 to 517 (KEKH…KPKK), 690 to 812 (NQNQ…NQNQ), 860 to 1074 (INNN…INSN), 1108 to 1175 (INNI…NSNS), 1188 to 1216 (SNSN…VDVD), 1224 to 1243 (VFIV…SVKT), 1340 to 1448 (ESNS…GNNI), 1476 to 1704 (IDNC…SNYY), 1731 to 1832 (NSNS…NEGF), and 2725 to 2773 (DRVR…NNNE). Residues 14-25 (HSTSFNDNFDSF) are compositionally biased toward polar residues. Low complexity-rich tracts occupy residues 26 to 124 (GNQN…NPKN), 171 to 348 (NNNN…YDNY), 388 to 414 (NNNT…LNNN), 421 to 446 (YYDN…QTNK), and 454 to 478 (KNNN…NSNN). Residues 505-514 (HENGDISESK) show a composition bias toward basic and acidic residues. Low complexity-rich tracts occupy residues 690–707 (NQNQ…QNHQ) and 714–749 (PQRQ…NQDQ). Positions 750–763 (YQDHDHEHEHDHDQ) are enriched in basic and acidic residues. The span at 764 to 781 (NQNQNQNQHQSRNQNQDQ) shows a compositional bias: low complexity. Residues 782–795 (YQDHDHEHEHDHDQ) show a composition bias toward basic and acidic residues. Low complexity-rich tracts occupy residues 796–812 (NQNQ…NQNQ), 860–891 (INNN…QSQN), 898–911 (DNRI…SSRD), 921–991 (CDFN…SFNN), and 1000–1074 (NNHN…INSN). Positions 1188-1212 (SNSNGFNNNNSNDQRNIDSSSNSDI) are enriched in low complexity. Residues 1230 to 1243 (TSSNKSNRASSVKT) are compositionally biased toward polar residues. 2 stretches are compositionally biased toward low complexity: residues 1377–1448 (DNGN…GNNI) and 1476–1639 (IDNC…NDND). Positions 1640-1659 (IGNDFDNDNDNDSYIDDDNN) are enriched in acidic residues. Composition is skewed to low complexity over residues 1660-1704 (VYDN…SNYY), 1731-1823 (NSNS…NNNS), and 2739-2754 (SSSG…SGGS). Positions 2758–2773 (NLDDSENESDSENNNE) are enriched in acidic residues.

This is an uncharacterized protein from Dictyostelium discoideum (Social amoeba).